The chain runs to 104 residues: ATP-dependent Clp protease adapter protein ClpS (104 aa).

The protein belongs to the ClpS family. In terms of assembly, binds to the N-terminal domain of the chaperone ClpA.

Involved in the modulation of the specificity of the ClpAP-mediated ATP-dependent protein degradation. The protein is ATP-dependent Clp protease adapter protein ClpS of Hydrogenovibrio crunogenus (strain DSM 25203 / XCL-2) (Thiomicrospira crunogena).